A 301-amino-acid polypeptide reads, in one-letter code: Pseudouridine-5'-phosphate glycosidase (301 aa).

Glu-23 serves as the catalytic Proton donor. Positions 84 and 104 each coordinate substrate. Asp-136 lines the Mn(2+) pocket. 138–140 serves as a coordination point for substrate; the sequence is SRD. Catalysis depends on Lys-157, which acts as the Nucleophile.

Belongs to the pseudouridine-5'-phosphate glycosidase family. Homotrimer. Mn(2+) is required as a cofactor.

It catalyses the reaction D-ribose 5-phosphate + uracil = psi-UMP + H2O. In terms of biological role, catalyzes the reversible cleavage of pseudouridine 5'-phosphate (PsiMP) to ribose 5-phosphate and uracil. Functions biologically in the cleavage direction, as part of a pseudouridine degradation pathway. The chain is Pseudouridine-5'-phosphate glycosidase from Mycoplasmopsis agalactiae (strain NCTC 10123 / CIP 59.7 / PG2) (Mycoplasma agalactiae).